A 223-amino-acid polypeptide reads, in one-letter code: Urease accessory protein UreF (223 aa).

It belongs to the UreF family. UreD, UreF and UreG form a complex that acts as a GTP-hydrolysis-dependent molecular chaperone, activating the urease apoprotein by helping to assemble the nickel containing metallocenter of UreC. The UreE protein probably delivers the nickel.

Its subcellular location is the cytoplasm. Functionally, required for maturation of urease via the functional incorporation of the urease nickel metallocenter. This is Urease accessory protein UreF from Pseudomonas paraeruginosa (strain DSM 24068 / PA7) (Pseudomonas aeruginosa (strain PA7)).